A 739-amino-acid chain; its full sequence is TonB-dependent heme receptor A (739 aa).

The first 22 residues, 1–22 (MKMKKQCATLTFFIGLHGYTIA), serve as a signal peptide directing secretion. The TBDR plug domain occupies 38-150 (GHHERQPDRS…FAGTIKLETK (113 aa)). The TBDR beta-barrel domain occupies 161–739 (LLGGLLKYGY…NIKLSISKQF (579 aa)).

It belongs to the TonB-dependent receptor family.

It is found in the cell outer membrane. In terms of biological role, heme receptor. This Haemophilus ducreyi (strain 35000HP / ATCC 700724) protein is TonB-dependent heme receptor A (tdhA).